Consider the following 217-residue polypeptide: Cytidylate kinase (217 aa).

10–18 (GPAGAGKST) provides a ligand contact to ATP.

It belongs to the cytidylate kinase family. Type 1 subfamily.

Its subcellular location is the cytoplasm. The catalysed reaction is CMP + ATP = CDP + ADP. The enzyme catalyses dCMP + ATP = dCDP + ADP. The protein is Cytidylate kinase of Clostridium botulinum (strain Okra / Type B1).